A 484-amino-acid polypeptide reads, in one-letter code: Glutamate--tRNA ligase (484 aa).

Positions 11–21 (PSPTGLLHIGN) match the 'HIGH' region motif. The short motif at 255 to 259 (KLSKR) is the 'KMSKS' region element. Lys258 lines the ATP pocket.

This sequence belongs to the class-I aminoacyl-tRNA synthetase family. Glutamate--tRNA ligase type 1 subfamily. As to quaternary structure, monomer.

Its subcellular location is the cytoplasm. It catalyses the reaction tRNA(Glu) + L-glutamate + ATP = L-glutamyl-tRNA(Glu) + AMP + diphosphate. Its function is as follows. Catalyzes the attachment of glutamate to tRNA(Glu) in a two-step reaction: glutamate is first activated by ATP to form Glu-AMP and then transferred to the acceptor end of tRNA(Glu). This Streptococcus agalactiae serotype Ia (strain ATCC 27591 / A909 / CDC SS700) protein is Glutamate--tRNA ligase.